A 336-amino-acid chain; its full sequence is Holliday junction branch migration complex subunit RuvB (336 aa).

Residues 4–184 (SDRLISSQSI…FGIVQRLEYY (181 aa)) are large ATPase domain (RuvB-L). ATP is bound by residues I23, R24, G65, K68, T69, T70, 131 to 133 (EDY), R174, Y184, and R221. Residue T69 participates in Mg(2+) binding. Positions 185 to 255 (SVDSLTQIVA…MAQQALEMLE (71 aa)) are small ATPAse domain (RuvB-S). A head domain (RuvB-H) region spans residues 258–336 (QHGFDLMDRK…HFGFSAIEQE (79 aa)). The DNA site is built by R313 and R318.

The protein belongs to the RuvB family. In terms of assembly, homohexamer. Forms an RuvA(8)-RuvB(12)-Holliday junction (HJ) complex. HJ DNA is sandwiched between 2 RuvA tetramers; dsDNA enters through RuvA and exits via RuvB. An RuvB hexamer assembles on each DNA strand where it exits the tetramer. Each RuvB hexamer is contacted by two RuvA subunits (via domain III) on 2 adjacent RuvB subunits; this complex drives branch migration. In the full resolvosome a probable DNA-RuvA(4)-RuvB(12)-RuvC(2) complex forms which resolves the HJ.

The protein localises to the cytoplasm. The enzyme catalyses ATP + H2O = ADP + phosphate + H(+). Its function is as follows. The RuvA-RuvB-RuvC complex processes Holliday junction (HJ) DNA during genetic recombination and DNA repair, while the RuvA-RuvB complex plays an important role in the rescue of blocked DNA replication forks via replication fork reversal (RFR). RuvA specifically binds to HJ cruciform DNA, conferring on it an open structure. The RuvB hexamer acts as an ATP-dependent pump, pulling dsDNA into and through the RuvAB complex. RuvB forms 2 homohexamers on either side of HJ DNA bound by 1 or 2 RuvA tetramers; 4 subunits per hexamer contact DNA at a time. Coordinated motions by a converter formed by DNA-disengaged RuvB subunits stimulates ATP hydrolysis and nucleotide exchange. Immobilization of the converter enables RuvB to convert the ATP-contained energy into a lever motion, pulling 2 nucleotides of DNA out of the RuvA tetramer per ATP hydrolyzed, thus driving DNA branch migration. The RuvB motors rotate together with the DNA substrate, which together with the progressing nucleotide cycle form the mechanistic basis for DNA recombination by continuous HJ branch migration. Branch migration allows RuvC to scan DNA until it finds its consensus sequence, where it cleaves and resolves cruciform DNA. This chain is Holliday junction branch migration complex subunit RuvB, found in Legionella pneumophila (strain Lens).